The primary structure comprises 707 residues: Ornithine decarboxylase (707 aa).

Residues 83–102 (NRNPLSRADSAAGREETAQT) form a disordered region. Lys288 carries the N6-(pyridoxal phosphate)lysine modification. Pyridoxal 5'-phosphate-binding positions include Ser421, Gly458, and 498–501 (EPGR). Residue 561 to 562 (FD) participates in substrate binding. The Proton donor; shared with dimeric partner role is filled by Cys634. Asp635 provides a ligand contact to substrate. Tyr663 provides a ligand contact to pyridoxal 5'-phosphate.

Belongs to the Orn/Lys/Arg decarboxylase class-II family. Homodimer. Only the dimer is catalytically active, as the active sites are constructed of residues from both monomers. Pyridoxal 5'-phosphate serves as cofactor.

The enzyme catalyses L-ornithine + H(+) = putrescine + CO2. It participates in amine and polyamine biosynthesis; putrescine biosynthesis via L-ornithine pathway; putrescine from L-ornithine: step 1/1. Its activity is regulated as follows. Inhibited by antizyme (AZ) in response to polyamine levels. AZ inhibits the assembly of the functional homodimer by binding to ODC monomers and targeting them for ubiquitin-independent proteolytic destruction by the 26S proteasome. Inhibited by 1-amino-oxy-3-aminopropane (APA, an isosteric analog of putrescine). Irreversibly inhibited by alpha-difluoromethylornithine (DFMO, a curative agent of West African sleeping sickness). Catalyzes the first and rate-limiting step of polyamine biosynthesis that converts ornithine into putrescine, which is the precursor for the polyamines, spermidine and spermine. Polyamines are essential for cell proliferation and are implicated in cellular processes, ranging from DNA replication to apoptosis. The sequence is that of Ornithine decarboxylase from Leishmania donovani.